A 319-amino-acid polypeptide reads, in one-letter code: Adenosine receptor A3 (319 aa).

Residues 1-15 are Extracellular-facing; sequence MEADNTTETDWLNIT. N5 and N13 each carry an N-linked (GlcNAc...) asparagine glycan. A helical transmembrane segment spans residues 16–38; that stretch reads YITMEAAIGLCAVVGNMLVIWVV. Topologically, residues 39-49 are cytoplasmic; the sequence is KLNPTLRTTTV. Residues 50–73 form a helical membrane-spanning segment; it reads YFIVSLALADIAVGVLVIPLAIAV. Residues 74–85 lie on the Extracellular side of the membrane; sequence SLQVKMHFYACL. C84 and C167 are oxidised to a cystine. Residues 86–107 form a helical membrane-spanning segment; the sequence is FMSCVLLIFTHASIMSLLAIAV. Topologically, residues 108–127 are cytoplasmic; sequence HRYLRVKLTVRYRTVTTQRR. A helical membrane pass occupies residues 128–149; sequence IWLFLGLCWLVSFLVGLTPMFG. Topologically, residues 150–178 are extracellular; that stretch reads WNRKATLASSQNSSTLLCHFRSVVSLDYM. N161 carries an N-linked (GlcNAc...) asparagine glycan. Residues 179-199 traverse the membrane as a helical segment; sequence VFFSFITWILVPLVVMCIIYL. Over 200–232 the chain is Cytoplasmic; sequence DIFYIIRNKLSQNLTGFRETRAFYGREFKTAKS. A helical transmembrane segment spans residues 233 to 256; that stretch reads LFLVLFLFALCWLPLSIINFVSYF. Over 257–262 the chain is Extracellular; the sequence is DVKIPD. A helical transmembrane segment spans residues 263–285; that stretch reads VAMCLGILLSHANSMMNPIVYAC. Residues 286–319 lie on the Cytoplasmic side of the membrane; sequence KIKKFKETYFLILRAVRLCQTSDSLDSNMEQTTE. A lipid anchor (S-palmitoyl cysteine) is attached at C304.

The protein belongs to the G-protein coupled receptor 1 family. In terms of processing, phosphorylation on Thr-317 and Thr-318 may be crucial for rapid desensitization. Phosphorylation on Thr-317 may be necessary for phosphorylation on Thr-318 to occur.

The protein resides in the cell membrane. Functionally, receptor for adenosine. The activity of this receptor is mediated by G proteins which inhibits adenylyl cyclase. The chain is Adenosine receptor A3 (Adora3) from Mus musculus (Mouse).